A 61-amino-acid polypeptide reads, in one-letter code: Large ribosomal subunit protein eL24 (61 aa).

Positions 7, 10, 33, and 37 each coordinate Zn(2+). A C4-type zinc finger spans residues 7–37 (CSFCGHEIPPGTGLMYVRNDGTMLWFCSSKC).

Belongs to the eukaryotic ribosomal protein eL24 family. As to quaternary structure, part of the 50S ribosomal subunit. Forms a cluster with proteins L3 and L14. It depends on Zn(2+) as a cofactor.

Functionally, binds to the 23S rRNA. This Saccharolobus islandicus (strain M.16.27) (Sulfolobus islandicus) protein is Large ribosomal subunit protein eL24.